A 92-amino-acid chain; its full sequence is Small ribosomal subunit protein uS19c (92 aa).

Belongs to the universal ribosomal protein uS19 family.

It localises to the plastid. The protein localises to the chloroplast. Functionally, protein S19 forms a complex with S13 that binds strongly to the 16S ribosomal RNA. The polypeptide is Small ribosomal subunit protein uS19c (Dioscorea elephantipes (Elephant's foot yam)).